We begin with the raw amino-acid sequence, 503 residues long: AMP phosphorylase (503 aa).

AMP is bound by residues Gly-168, 194–199, and Thr-203; that span reads SRAITS. The Proton donor role is filled by Asp-256. The AMP site is built by Ser-264 and Lys-288.

It belongs to the thymidine/pyrimidine-nucleoside phosphorylase family. Type 2 subfamily.

The catalysed reaction is AMP + phosphate = alpha-D-ribose 1,5-bisphosphate + adenine. It carries out the reaction CMP + phosphate = cytosine + alpha-D-ribose 1,5-bisphosphate. It catalyses the reaction UMP + phosphate = alpha-D-ribose 1,5-bisphosphate + uracil. Catalyzes the conversion of AMP and phosphate to adenine and ribose 1,5-bisphosphate (R15P). Exhibits phosphorylase activity toward CMP and UMP in addition to AMP. Functions in an archaeal AMP degradation pathway, together with R15P isomerase and RubisCO. The sequence is that of AMP phosphorylase from Pyrococcus horikoshii (strain ATCC 700860 / DSM 12428 / JCM 9974 / NBRC 100139 / OT-3).